Here is a 325-residue protein sequence, read N- to C-terminus: ATP synthase gamma chain (325 aa).

This sequence belongs to the ATPase gamma chain family. In terms of assembly, F-type ATPases have 2 components, CF(1) - the catalytic core - and CF(0) - the membrane proton channel. CF(1) has five subunits: alpha(3), beta(3), gamma(1), delta(1), epsilon(1). CF(0) has three main subunits: a, b and c.

It localises to the cell membrane. Produces ATP from ADP in the presence of a proton gradient across the membrane. The gamma chain is believed to be important in regulating ATPase activity and the flow of protons through the CF(0) complex. The protein is ATP synthase gamma chain of Corynebacterium diphtheriae (strain ATCC 700971 / NCTC 13129 / Biotype gravis).